A 168-amino-acid polypeptide reads, in one-letter code: Ubiquitin-conjugating enzyme E2 2 (168 aa).

The UBC core domain occupies 4–150 (PAKRRLMRDF…VRETVENSWN (147 aa)). Residue C88 is the Glycyl thioester intermediate of the active site. The interval 143 to 168 (ETVENSWNEDDEDEDEDEDEDIDDAE) is disordered. Positions 149–168 (WNEDDEDEDEDEDEDIDDAE) are enriched in acidic residues.

Belongs to the ubiquitin-conjugating enzyme family.

It localises to the cytoplasm. It is found in the nucleus. The catalysed reaction is S-ubiquitinyl-[E1 ubiquitin-activating enzyme]-L-cysteine + [E2 ubiquitin-conjugating enzyme]-L-cysteine = [E1 ubiquitin-activating enzyme]-L-cysteine + S-ubiquitinyl-[E2 ubiquitin-conjugating enzyme]-L-cysteine.. Its pathway is protein modification; protein ubiquitination. Its function is as follows. Catalyzes the covalent attachment of ubiquitin to other proteins. Plays a role in transcription regulation by catalyzing the monoubiquitination of histone H2B to form H2BK123ub1. H2BK123ub1 gives a specific tag for epigenetic transcriptional activation and is also a prerequisite for H3K4me and H3K79me formation. Also involved in postreplication repair of UV-damaged DNA, in N-end rule-dependent protein degradation and in sporulation. The polypeptide is Ubiquitin-conjugating enzyme E2 2 (UBC2) (Debaryomyces hansenii (strain ATCC 36239 / CBS 767 / BCRC 21394 / JCM 1990 / NBRC 0083 / IGC 2968) (Yeast)).